Reading from the N-terminus, the 217-residue chain is N-(5'-phosphoribosyl)anthranilate isomerase (217 aa).

The protein belongs to the TrpF family.

It carries out the reaction N-(5-phospho-beta-D-ribosyl)anthranilate = 1-(2-carboxyphenylamino)-1-deoxy-D-ribulose 5-phosphate. Its pathway is amino-acid biosynthesis; L-tryptophan biosynthesis; L-tryptophan from chorismate: step 3/5. This chain is N-(5'-phosphoribosyl)anthranilate isomerase, found in Synechococcus elongatus (strain ATCC 33912 / PCC 7942 / FACHB-805) (Anacystis nidulans R2).